The chain runs to 494 residues: Psoralen synthase (494 aa).

A helical transmembrane segment spans residues 12 to 29 (YFFSLFLVTIFLYKWLTL). Cys-436 serves as a coordination point for heme.

It belongs to the cytochrome P450 family.

The protein localises to the endoplasmic reticulum membrane. The protein resides in the microsome membrane. It catalyses the reaction (7S)-marmesin + reduced [NADPH--hemoprotein reductase] + O2 = psoralen + acetone + oxidized [NADPH--hemoprotein reductase] + 2 H2O + H(+). With respect to regulation, inhibited by columbianetin. In terms of biological role, involved in linear furanocumarin (psoralen) biosynthesis. Converts marmesin to psoralen. This Ammi majus (Bishop's weed) protein is Psoralen synthase (CYP71AJ1).